Reading from the N-terminus, the 119-residue chain is Anther-specific protein BCP1 (119 aa).

Residues 1–23 (MGRQNVVVVFGLVFLAVLGLAAA) form the signal peptide. The span at 24-42 (ASSPSPSASPSKAPSTSTP) shows a compositional bias: low complexity. The segment at 24–95 (ASSPSPSASP…PSGSADSADS (72 aa)) is disordered. Residues 24 to 98 (ASSPSPSASP…SADSADSGAA (75 aa)) lie on the Extracellular side of the membrane. Over residues 56-69 (TDDDAAASPGDDDV) the composition is skewed to acidic residues. A compositionally biased stretch (low complexity) spans 82-95 (GSNGPSGSADSADS). A helical membrane pass occupies residues 99–118 (ALGVSAVVVGVTSIVGSFLF). Phe119 is a topological domain (cytoplasmic).

As to expression, expressed in mature pollen grains, developing microspores and tapetal cells.

It is found in the membrane. Required for pollen fertility and development. Active in both diploid tapetum and haploid microspores. Major pollen protein. This Brassica campestris (Field mustard) protein is Anther-specific protein BCP1 (BCP1).